The sequence spans 146 residues: Peptidyl-lysine N-acetyltransferase YiaC (146 aa).

The 143-residue stretch at 1–143 (MIREAQRSEL…PTWIMSWPVV (143 aa)) folds into the N-acetyltransferase domain.

The protein belongs to the acetyltransferase family.

It catalyses the reaction L-lysyl-[protein] + acetyl-CoA = N(6)-acetyl-L-lysyl-[protein] + CoA + H(+). Its function is as follows. N-epsilon-lysine acetyltransferase that catalyzes acetylation of a large number of proteins. Overexpression inhibits motility. This is Peptidyl-lysine N-acetyltransferase YiaC (yiaC) from Escherichia coli (strain K12).